Here is a 326-residue protein sequence, read N- to C-terminus: Ribosomal large subunit pseudouridine synthase D (326 aa).

The S4 RNA-binding domain occupies 18–91; sequence QRLDQALAEM…IPLDIVYEDE (74 aa). Asp-139 is an active-site residue.

Belongs to the pseudouridine synthase RluA family.

It is found in the cytoplasm. It catalyses the reaction uridine(1911/1915/1917) in 23S rRNA = pseudouridine(1911/1915/1917) in 23S rRNA. Responsible for synthesis of pseudouridine from uracil at positions 1911, 1915 and 1917 in 23S ribosomal RNA. The polypeptide is Ribosomal large subunit pseudouridine synthase D (rluD) (Shigella flexneri).